We begin with the raw amino-acid sequence, 566 residues long: Deformed epidermal autoregulatory factor 1 homolog (566 aa).

Disordered regions lie at residues 33-62 and 163-191; these read AESE…ETRR and GLKG…KGGT. Residues 170–182 show a composition bias toward pro residues; sequence PLTPGPQSPPTPL. At Thr-172 the chain carries Phosphothreonine. Ser-177 is subject to Phosphoserine. The residue at position 180 (Thr-180) is a Phosphothreonine. One can recognise an SAND domain in the interval 194-274; that stretch reads NWDPSVYDSE…QCLIQDGILN (81 aa). The Nuclear localization signal motif lies at 300-306; the sequence is PYKRRKK. Residues 404–479 are interaction with LMO4; the sequence is IAPFPEAALP…QLKTLFEQAK (76 aa). Thr-433 bears the Phosphothreonine mark. Residues Ser-444 and Ser-449 each carry the phosphoserine modification. Residues Cys-505, Cys-508, Cys-516, Cys-519, Cys-525, Cys-529, His-537, and Cys-541 each coordinate Zn(2+). The segment at 505-541 adopts an MYND-type zinc-finger fold; the sequence is CVNCGREAMSECTGCHKVNYCSTFCQRKDWKDHQHVC.

Homodimer. Isoform 1 and isoform 2 may form a heterodimer. May interact with the corepressors NCOR1 and NCRO2. Identified in a complex with XRCC5 and XRCC6. Interacts (via the SAND domain) with the DNA-PK complex subunit XRCC6; the interaction is direct with XRCC6 and may be inhibited by DNA-binding. Interacts with LMO4; LMO4 blocks export from nucleus. Interacts with LMO2 and CLIM2. In terms of processing, may be phosphorylated by DNA-PK complex in a DNA independent manner (in vitro). As to expression, ubiquitously expressed during embryogenesis, with higher expression in regions of the central nervous system, dorsal root ganglia, submandibular gland, epidermis and breast. In 12-week-old NOD mice, expression of isoform 2 is sevenfold higher in lymph node stromal elements than in T-cells and tenfold higher than in B-cells.

The protein resides in the nucleus. It is found in the cytoplasm. Its function is as follows. Transcription factor that binds to sequence with multiple copies of 5'-TTC[CG]G-3' present in its own promoter and that of the HNRPA2B1 gene. Down-regulates transcription of these genes. Binds to the retinoic acid response element (RARE) 5'-AGGGTTCACCGAAAGTTCA-3'. Activates the proenkephalin gene independently of promoter binding, probably through protein-protein interaction. Regulates epithelial cell proliferation and side-branching in the mammary gland. Required for neural tube closure and skeletal patterning. Controls the expression of peripheral tissue antigens in pancreatic lymph nodes. Isoform 1 displays greater transcriptional activity than isoform 2. Isoform 2 may inhibit transcriptional activity of isoform 1 by interacting with it and retaining it in the cytoplasm. Transcriptional activator of EIF4G3. May also involved in behavior. The protein is Deformed epidermal autoregulatory factor 1 homolog (Deaf1) of Mus musculus (Mouse).